A 730-amino-acid chain; its full sequence is Polyphosphate kinase (730 aa).

Residues 1–21 are compositionally biased toward basic and acidic residues; it reads MMRHDRNVTEIDAETRPDENL. The interval 1–39 is disordered; it reads MMRHDRNVTEIDAETRPDENLWHSGDSAVGAPPAATPAA. N86 provides a ligand contact to ATP. The Mg(2+) site is built by R423 and R453. H483 serves as the catalytic Phosphohistidine intermediate. 3 residues coordinate ATP: Y516, R612, and H640.

The protein belongs to the polyphosphate kinase 1 (PPK1) family. It depends on Mg(2+) as a cofactor. An intermediate of this reaction is the autophosphorylated ppk in which a phosphate is covalently linked to a histidine residue through a N-P bond.

It catalyses the reaction [phosphate](n) + ATP = [phosphate](n+1) + ADP. In terms of biological role, catalyzes the reversible transfer of the terminal phosphate of ATP to form a long-chain polyphosphate (polyP). In Mycolicibacterium paratuberculosis (strain ATCC BAA-968 / K-10) (Mycobacterium paratuberculosis), this protein is Polyphosphate kinase.